The primary structure comprises 147 residues: Small ribosomal subunit protein uS12 (147 aa).

Belongs to the universal ribosomal protein uS12 family. Part of the 30S ribosomal subunit.

Functionally, with S4 and S5 plays an important role in translational accuracy. Located at the interface of the 30S and 50S subunits. The polypeptide is Small ribosomal subunit protein uS12 (Thermococcus kodakarensis (strain ATCC BAA-918 / JCM 12380 / KOD1) (Pyrococcus kodakaraensis (strain KOD1))).